A 240-amino-acid chain; its full sequence is uncharacterized protein (240 aa).

A signal peptide spans Met1–Ala17.

This is an uncharacterized protein from Treponema pallidum (strain Nichols).